Consider the following 203-residue polypeptide: Superoxide dismutase [Mn/Fe] (203 aa).

Fe(3+) contacts are provided by His-27, His-81, Asp-163, and His-167. Residues His-27, His-81, Asp-163, and His-167 each contribute to the Mn(2+) site.

Belongs to the iron/manganese superoxide dismutase family. Mn(2+) is required as a cofactor. Fe(3+) serves as cofactor.

It carries out the reaction 2 superoxide + 2 H(+) = H2O2 + O2. In terms of biological role, destroys superoxide anion radicals which are normally produced within the cells and which are toxic to biological systems. Catalyzes the dismutation of superoxide anion radicals into O2 and H2O2 by successive reduction and oxidation of the transition metal ion at the active site. The chain is Superoxide dismutase [Mn/Fe] (sodA) from Streptococcus mutans serotype c (strain ATCC 700610 / UA159).